The following is a 164-amino-acid chain: Lipoprotein signal peptidase (164 aa).

A run of 3 helical transmembrane segments spans residues 12-32 (WLWLVVVVLIIDLGSKYLILQ), 70-90 (WFFAGIAIGISVILAVMMYRS), and 102-122 (ALIIGGALGNLFDRLWHGFVV). Active-site residues include aspartate 123 and aspartate 141. A helical transmembrane segment spans residues 137–157 (FNLADTAICVGAALIVLEGFL).

This sequence belongs to the peptidase A8 family.

The protein localises to the cell inner membrane. The enzyme catalyses Release of signal peptides from bacterial membrane prolipoproteins. Hydrolyzes -Xaa-Yaa-Zaa-|-(S,diacylglyceryl)Cys-, in which Xaa is hydrophobic (preferably Leu), and Yaa (Ala or Ser) and Zaa (Gly or Ala) have small, neutral side chains.. Its pathway is protein modification; lipoprotein biosynthesis (signal peptide cleavage). Its function is as follows. This protein specifically catalyzes the removal of signal peptides from prolipoproteins. In Escherichia coli O9:H4 (strain HS), this protein is Lipoprotein signal peptidase.